The following is a 340-amino-acid chain: RNA 3'-terminal phosphate cyclase (340 aa).

Residues Gln102 and 284–288 (FLGDQ) each bind ATP. His308 serves as the catalytic Tele-AMP-histidine intermediate.

The protein belongs to the RNA 3'-terminal cyclase family. Type 1 subfamily.

It is found in the cytoplasm. It carries out the reaction a 3'-end 3'-phospho-ribonucleotide-RNA + ATP = a 3'-end 2',3'-cyclophospho-ribonucleotide-RNA + AMP + diphosphate. Functionally, catalyzes the conversion of 3'-phosphate to a 2',3'-cyclic phosphodiester at the end of RNA. The mechanism of action of the enzyme occurs in 3 steps: (A) adenylation of the enzyme by ATP; (B) transfer of adenylate to an RNA-N3'P to produce RNA-N3'PP5'A; (C) and attack of the adjacent 2'-hydroxyl on the 3'-phosphorus in the diester linkage to produce the cyclic end product. The biological role of this enzyme is unknown but it is likely to function in some aspects of cellular RNA processing. In Thermococcus onnurineus (strain NA1), this protein is RNA 3'-terminal phosphate cyclase.